Reading from the N-terminus, the 4306-residue chain is Cytoplasmic dynein 2 heavy chain 1 (4306 aa).

The stem stretch occupies residues 1–1650; the sequence is MAGSLSDVRK…YVQMVDSELQ (1650 aa). 145-152 contacts ATP; the sequence is LGVVLRKS. Positions 669-696 form a coiled coil; sequence KELEGYIQKLQNAAERLATENRRLRKWH. AAA stretches follow at residues 1651 to 1875, 1941 to 2161, 2249 to 2505, and 2617 to 2862; these read YTYE…VLRG, SALK…KQND, LTAD…WVLG, and HYGR…ESCK. ATP contacts are provided by residues 1689-1696, 1979-1986, 2291-2298, and 2655-2662; these read GPAGTGKT, GPSGAGKS, GPEGCGKG, and GRSGVGRR. A stalk region spans residues 2880–3168; the sequence is AISSSKRKEL…AEVSKAQETI (289 aa). 3 coiled-coil regions span residues 2896–2981, 3108–3199, and 3407–3441; these read LQAG…KEVQ, LETE…LATL, and IQHEKPDLEEQKTKLLQQEEDKKIQLARLEESLLE. AAA stretches follow at residues 3243-3472 and 3689-3904; these read LCTE…LIQD and MALF…VIDR.

The protein belongs to the dynein heavy chain family. As to quaternary structure, the cytoplasmic dynein complex 2 is probably composed by a heavy chain DYNC2H1 homodimer and a number of DYNC2LI1 light intermediate chains. As to expression, widely expressed both in ciliated and unciliated tissues. Detected in brain and testis (at protein level).

It is found in the cytoplasm. The protein localises to the cytoskeleton. It localises to the cilium axoneme. Its subcellular location is the cell membrane. Its function is as follows. May function as a motor for intraflagellar retrograde transport. Functions in cilia biogenesis. May play a role in transport between endoplasmic reticulum and Golgi or organization of the Golgi in cells. In Rattus norvegicus (Rat), this protein is Cytoplasmic dynein 2 heavy chain 1 (Dync2h1).